Reading from the N-terminus, the 466-residue chain is ATP synthase subunit beta (466 aa).

Residue 155–162 participates in ATP binding; the sequence is GGAGVGKT.

The protein belongs to the ATPase alpha/beta chains family. In terms of assembly, F-type ATPases have 2 components, CF(1) - the catalytic core - and CF(0) - the membrane proton channel. CF(1) has five subunits: alpha(3), beta(3), gamma(1), delta(1), epsilon(1). CF(0) has three main subunits: a(1), b(2) and c(9-12). The alpha and beta chains form an alternating ring which encloses part of the gamma chain. CF(1) is attached to CF(0) by a central stalk formed by the gamma and epsilon chains, while a peripheral stalk is formed by the delta and b chains.

The protein resides in the cell inner membrane. The enzyme catalyses ATP + H2O + 4 H(+)(in) = ADP + phosphate + 5 H(+)(out). Functionally, produces ATP from ADP in the presence of a proton gradient across the membrane. The catalytic sites are hosted primarily by the beta subunits. The sequence is that of ATP synthase subunit beta from Bordetella petrii (strain ATCC BAA-461 / DSM 12804 / CCUG 43448).